The chain runs to 101 residues: UPF0235 protein Mevan_0378 (101 aa).

This sequence belongs to the UPF0235 family.

The chain is UPF0235 protein Mevan_0378 from Methanococcus vannielii (strain ATCC 35089 / DSM 1224 / JCM 13029 / OCM 148 / SB).